The following is a 157-amino-acid chain: Protein UXT (157 aa).

The protein belongs to the UXT family. In terms of assembly, homohexamer. Component of the PAQosome complex which is responsible for the biogenesis of several protein complexes and which consists of R2TP complex members RUVBL1, RUVBL2, RPAP3 and PIH1D1, URI complex members PFDN2, PFDN6, PDRG1, UXT and URI1 as well as ASDURF, POLR2E and DNAAF10/WDR92. Interacts with LRPPRC. Interacts with androgen receptor AR (via N-terminus). Interacts with estrogen receptor ESR1; the interaction relocalizes ESR1 from the nucleus to the cytoplasm. In the nucleus, interacts specifically with RELA (via RHD domain) and forms a dynamic complex with NF-kappa-B and is recruited to the NF-kappa-B enhanceosome upon stimulation. Interacts with MECOM. Interacts with URI1. As to quaternary structure, part of complex I composed of TNF-alpha receptor TNFRSF1A, TRADD, TRAF2 and RIPK1 formed in response to TNF-alpha stimulation. Within the complex, interacts (via TPQE motif) with TRAF2; the interaction prevents the recruitment of FADD and CASP8/caspase 8 to complex I. Post-translationally, ubiquitinated by E3 ubiquitin-protein ligase complex containing FBXO7; leading to proteasomal degradation. Ubiquitous. Expressed in prostate epithelial cells. Expressed in mammary epithelial cells. Highest levels in the heart, skeletal muscle, pancreas, kidney, liver, adrenal gland, peripheral blood leukocytes, lymph node, prostate, and thyroid and the lowest levels in bladder and uterus. Overexpressed in a number of tumor tissues.

It is found in the cytoplasm. Its subcellular location is the nucleus. The protein resides in the cytoskeleton. It localises to the microtubule organizing center. The protein localises to the centrosome. It is found in the spindle pole. In terms of biological role, involved in gene transcription regulation. Acts in concert with the corepressor URI1 to regulate androgen receptor AR-mediated transcription. Together with URI1, associates with chromatin to the NKX3-1 promoter region. Negatively regulates the transcriptional activity of the estrogen receptor ESR1 by inducing its translocation into the cytoplasm. May act as nuclear chaperone that facilitates the formation of the NF-kappa-B enhanceosome and thus positively regulates NF-kappa-B transcription activity. Potential component of mitochondrial-associated LRPPRC, a multidomain organizer that potentially integrates mitochondria and the microtubular cytoskeleton with chromosome remodeling. Increasing concentrations of UXT contributes to progressive aggregation of mitochondria and cell death potentially through its association with LRPPRC. Suppresses cell transformation and it might mediate this function by interaction and inhibition of the biological activity of cell proliferation and survival stimulatory factors like MECOM. Its function is as follows. Plays a role in protecting cells against TNF-alpha-induced apoptosis by preventing the recruitment of FADD and caspase 8 to the apoptotic complex I, composed of TRADD, TRAF2 and RIPK1/RIP. This chain is Protein UXT (UXT), found in Homo sapiens (Human).